Here is a 348-residue protein sequence, read N- to C-terminus: Killer cell immunoglobulin-like receptor 2DL2 (348 aa).

An N-terminal signal peptide occupies residues 1-21; that stretch reads MSLMVVSMACVGFFLLQGAWP. The Extracellular portion of the chain corresponds to 22–245; sequence HEGVHRKPSL…SKTGNPRHLH (224 aa). 2 Ig-like C2-type domains span residues 42–107 and 142–205; these read EETV…VTHS and GESV…FRDS. 2 disulfides stabilise this stretch: Cys-49/Cys-100 and Cys-149/Cys-198. N-linked (GlcNAc...) asparagine glycans are attached at residues Asn-84, Asn-178, and Asn-211. The chain crosses the membrane as a helical span at residues 246-264; it reads ILIGTSVVIILFILLFFLL. Over 265-348 the chain is Cytoplasmic; the sequence is HRWCSNKKNA…ESRSKVVSCP (84 aa).

This sequence belongs to the immunoglobulin superfamily.

The protein resides in the cell membrane. Its function is as follows. Receptor on natural killer (NK) cells for HLA-Cw1, 3, 7, and 8 allotypes. Inhibits the activity of NK cells thus preventing cell lysis. The sequence is that of Killer cell immunoglobulin-like receptor 2DL2 from Homo sapiens (Human).